The following is a 65-amino-acid chain: Large ribosomal subunit protein bL35 (65 aa).

It belongs to the bacterial ribosomal protein bL35 family.

The polypeptide is Large ribosomal subunit protein bL35 (Caldicellulosiruptor saccharolyticus (strain ATCC 43494 / DSM 8903 / Tp8T 6331)).